We begin with the raw amino-acid sequence, 131 residues long: Heterochromatin silencing protein rss1 (131 aa).

Monomer.

Its subcellular location is the cytoplasm. The protein resides in the nucleus. Functionally, required for heterochromatin silencing within pericentromeric repeats and at telomers. Facilitates the recruitment of Clr6 histone deacetylase (HDAC) by interacting with histones. Also interacts with Rad25, which mediates heterochromatin silencing in DNA repeats by recruiting the RITS complex. Together with Rad25, forms a regulatory hub that defines heterochromatin silencing within tandem repeats via linking RNAi and HDAC. The protein is Heterochromatin silencing protein rss1 (rss1) of Schizosaccharomyces pombe (strain 972 / ATCC 24843) (Fission yeast).